The following is a 305-amino-acid chain: Elongation factor Ts (305 aa).

The involved in Mg(2+) ion dislocation from EF-Tu stretch occupies residues Thr81–Val84.

This sequence belongs to the EF-Ts family.

The protein localises to the cytoplasm. Associates with the EF-Tu.GDP complex and induces the exchange of GDP to GTP. It remains bound to the aminoacyl-tRNA.EF-Tu.GTP complex up to the GTP hydrolysis stage on the ribosome. The protein is Elongation factor Ts of Nitratiruptor sp. (strain SB155-2).